A 366-amino-acid polypeptide reads, in one-letter code: tRNA/tmRNA (uracil-C(5))-methyltransferase (366 aa).

The S-adenosyl-L-methionine site is built by Q189, Y217, N222, E238, and D298. The Nucleophile role is filled by C323. The Proton acceptor role is filled by E357.

This sequence belongs to the class I-like SAM-binding methyltransferase superfamily. RNA M5U methyltransferase family. TrmA subfamily.

The catalysed reaction is uridine(54) in tRNA + S-adenosyl-L-methionine = 5-methyluridine(54) in tRNA + S-adenosyl-L-homocysteine + H(+). It carries out the reaction uridine(341) in tmRNA + S-adenosyl-L-methionine = 5-methyluridine(341) in tmRNA + S-adenosyl-L-homocysteine + H(+). Its function is as follows. Dual-specificity methyltransferase that catalyzes the formation of 5-methyluridine at position 54 (m5U54) in all tRNAs, and that of position 341 (m5U341) in tmRNA (transfer-mRNA). This chain is tRNA/tmRNA (uracil-C(5))-methyltransferase, found in Shewanella putrefaciens (strain CN-32 / ATCC BAA-453).